We begin with the raw amino-acid sequence, 194 residues long: ATP-dependent Clp protease proteolytic subunit 4 (194 aa).

The active-site Nucleophile is the Ser-100. The active site involves His-125.

Belongs to the peptidase S14 family. As to quaternary structure, fourteen ClpP subunits assemble into 2 heptameric rings which stack back to back to give a disk-like structure with a central cavity, resembling the structure of eukaryotic proteasomes.

It localises to the cytoplasm. It catalyses the reaction Hydrolysis of proteins to small peptides in the presence of ATP and magnesium. alpha-casein is the usual test substrate. In the absence of ATP, only oligopeptides shorter than five residues are hydrolyzed (such as succinyl-Leu-Tyr-|-NHMec, and Leu-Tyr-Leu-|-Tyr-Trp, in which cleavage of the -Tyr-|-Leu- and -Tyr-|-Trp bonds also occurs).. In terms of biological role, cleaves peptides in various proteins in a process that requires ATP hydrolysis. Has a chymotrypsin-like activity. Plays a major role in the degradation of misfolded proteins. In Rhodococcus jostii (strain RHA1), this protein is ATP-dependent Clp protease proteolytic subunit 4.